The chain runs to 274 residues: 2,3,4,5-tetrahydropyridine-2,6-dicarboxylate N-succinyltransferase (274 aa).

The substrate site is built by Arg-104 and Asp-141.

It belongs to the transferase hexapeptide repeat family. In terms of assembly, homotrimer.

The protein localises to the cytoplasm. It catalyses the reaction (S)-2,3,4,5-tetrahydrodipicolinate + succinyl-CoA + H2O = (S)-2-succinylamino-6-oxoheptanedioate + CoA. The protein operates within amino-acid biosynthesis; L-lysine biosynthesis via DAP pathway; LL-2,6-diaminopimelate from (S)-tetrahydrodipicolinate (succinylase route): step 1/3. The chain is 2,3,4,5-tetrahydropyridine-2,6-dicarboxylate N-succinyltransferase from Sodalis glossinidius (strain morsitans).